A 124-amino-acid chain; its full sequence is MGNMGTSELLKHIYDINLSYLLLAQRLINDEKAFCKVFVGGIQGKGGAGYLDATGLLPQMVKLAETNQLICHFRFRRITITIQSLDSGNQRVDDLQQIHTGILLSSNLLQQLTSKEENLPKKRA.

Belongs to the FlhD family. In terms of assembly, homodimer; disulfide-linked. Forms a heterohexamer composed of two FlhC and four FlhD subunits. Each FlhC binds a FlhD dimer, forming a heterotrimer, and a hexamer assembles by dimerization of two heterotrimers.

It is found in the cytoplasm. Its function is as follows. Functions in complex with FlhC as a master transcriptional regulator that regulates transcription of several flagellar and non-flagellar operons by binding to their promoter region. Activates expression of class 2 flagellar genes, including fliA, which is a flagellum-specific sigma factor that turns on the class 3 genes. Also regulates genes whose products function in a variety of physiological pathways. The protein is Flagellar transcriptional regulator FlhD of Pectobacterium carotovorum (Erwinia carotovora).